The chain runs to 286 residues: Ribose-phosphate pyrophosphokinase (286 aa).

ATP-binding positions include 34–36 (DGE) and 91–92 (RQ). 2 residues coordinate Mg(2+): H124 and D161. K184 is a catalytic residue. Residues R186, D210, and 214-218 (STGGT) each bind D-ribose 5-phosphate.

Belongs to the ribose-phosphate pyrophosphokinase family. Class III (archaeal) subfamily. Mg(2+) serves as cofactor.

Its subcellular location is the cytoplasm. It catalyses the reaction D-ribose 5-phosphate + ATP = 5-phospho-alpha-D-ribose 1-diphosphate + AMP + H(+). The protein operates within metabolic intermediate biosynthesis; 5-phospho-alpha-D-ribose 1-diphosphate biosynthesis; 5-phospho-alpha-D-ribose 1-diphosphate from D-ribose 5-phosphate (route I): step 1/1. Its function is as follows. Involved in the biosynthesis of the central metabolite phospho-alpha-D-ribosyl-1-pyrophosphate (PRPP) via the transfer of pyrophosphoryl group from ATP to 1-hydroxyl of ribose-5-phosphate (Rib-5-P). This Thermoplasma acidophilum (strain ATCC 25905 / DSM 1728 / JCM 9062 / NBRC 15155 / AMRC-C165) protein is Ribose-phosphate pyrophosphokinase.